Consider the following 460-residue polypeptide: Chromosomal replication initiator protein DnaA (460 aa).

Residues 1–91 (MNLTSPKVST…SLWQSEDKSI (91 aa)) form a domain I, interacts with DnaA modulators region. The tract at residues 91 to 122 (IRSIDIQVIEERNSNFNVILKNREESNHNLGS) is domain II. Residues 123-342 (PLDPRFTFDN…GALNKVTHTS (220 aa)) form a domain III, AAA+ region region. 4 residues coordinate ATP: Gly169, Gly171, Lys172, and Thr173. The segment at 343–460 (LIGRSMTVES…EINRLKKMFK (118 aa)) is domain IV, binds dsDNA.

This sequence belongs to the DnaA family. In terms of assembly, oligomerizes as a right-handed, spiral filament on DNA at oriC.

It is found in the cytoplasm. In terms of biological role, plays an essential role in the initiation and regulation of chromosomal replication. ATP-DnaA binds to the origin of replication (oriC) to initiate formation of the DNA replication initiation complex once per cell cycle. Binds the DnaA box (a 9 base pair repeat at the origin) and separates the double-stranded (ds)DNA. Forms a right-handed helical filament on oriC DNA; dsDNA binds to the exterior of the filament while single-stranded (ss)DNA is stabiized in the filament's interior. The ATP-DnaA-oriC complex binds and stabilizes one strand of the AT-rich DNA unwinding element (DUE), permitting loading of DNA polymerase. After initiation quickly degrades to an ADP-DnaA complex that is not apt for DNA replication. Binds acidic phospholipids. The protein is Chromosomal replication initiator protein DnaA of Wolbachia pipientis wMel.